A 141-amino-acid chain; its full sequence is 2S seed storage albumin protein (141 aa).

The signal sequence occupies residues 1–22; the sequence is MARLTSIIALFAVALLVADAYA. The propeptide occupies 23-35; sequence YRTTITTVEVEEN. Cystine bridges form between cysteine 43/cysteine 97, cysteine 55/cysteine 86, cysteine 87/cysteine 132, and cysteine 99/cysteine 139.

This sequence belongs to the 2S seed storage albumins family. In terms of assembly, the mature protein consists of a small and a large chain linked by 2 disulfide bonds.

It is found in the vacuole. Its subcellular location is the aleurone grain. Its function is as follows. This is a 2S seed storage protein. The protein is 2S seed storage albumin protein of Cucurbita maxima (Pumpkin).